The primary structure comprises 148 residues: Large ribosomal subunit protein bL9 (148 aa).

The protein belongs to the bacterial ribosomal protein bL9 family.

Binds to the 23S rRNA. The sequence is that of Large ribosomal subunit protein bL9 from Dechloromonas aromatica (strain RCB).